The sequence spans 511 residues: ATP synthase subunit alpha (511 aa).

170-177 (GDRQTGKT) serves as a coordination point for ATP.

It belongs to the ATPase alpha/beta chains family. F-type ATPases have 2 components, CF(1) - the catalytic core - and CF(0) - the membrane proton channel. CF(1) has five subunits: alpha(3), beta(3), gamma(1), delta(1), epsilon(1). CF(0) has three main subunits: a(1), b(2) and c(9-12). The alpha and beta chains form an alternating ring which encloses part of the gamma chain. CF(1) is attached to CF(0) by a central stalk formed by the gamma and epsilon chains, while a peripheral stalk is formed by the delta and b chains.

It localises to the cell inner membrane. The catalysed reaction is ATP + H2O + 4 H(+)(in) = ADP + phosphate + 5 H(+)(out). In terms of biological role, produces ATP from ADP in the presence of a proton gradient across the membrane. The alpha chain is a regulatory subunit. In Granulibacter bethesdensis (strain ATCC BAA-1260 / CGDNIH1), this protein is ATP synthase subunit alpha.